The sequence spans 361 residues: Chorismate synthase (361 aa).

2 residues coordinate NADP(+): Arg48 and Arg54. FMN-binding positions include 125-127 (RSS), 238-239 (NA), Gly278, 293-297 (KPTSS), and Arg319.

Belongs to the chorismate synthase family. As to quaternary structure, homotetramer. FMNH2 serves as cofactor.

The enzyme catalyses 5-O-(1-carboxyvinyl)-3-phosphoshikimate = chorismate + phosphate. The protein operates within metabolic intermediate biosynthesis; chorismate biosynthesis; chorismate from D-erythrose 4-phosphate and phosphoenolpyruvate: step 7/7. Catalyzes the anti-1,4-elimination of the C-3 phosphate and the C-6 proR hydrogen from 5-enolpyruvylshikimate-3-phosphate (EPSP) to yield chorismate, which is the branch point compound that serves as the starting substrate for the three terminal pathways of aromatic amino acid biosynthesis. This reaction introduces a second double bond into the aromatic ring system. This Klebsiella pneumoniae (strain 342) protein is Chorismate synthase.